Consider the following 220-residue polypeptide: DNA-directed RNA polymerase subunit alpha (220 aa).

This sequence belongs to the RNA polymerase alpha chain family. As to quaternary structure, in plastids the minimal PEP RNA polymerase catalytic core is composed of four subunits: alpha, beta, beta', and beta''. When a (nuclear-encoded) sigma factor is associated with the core the holoenzyme is formed, which can initiate transcription.

The protein localises to the plastid. It carries out the reaction RNA(n) + a ribonucleoside 5'-triphosphate = RNA(n+1) + diphosphate. Its function is as follows. DNA-dependent RNA polymerase catalyzes the transcription of DNA into RNA using the four ribonucleoside triphosphates as substrates. The protein is DNA-directed RNA polymerase subunit alpha (rpoA) of Euglena longa (Euglenophycean alga).